Consider the following 62-residue polypeptide: Enterocin E-760 (62 aa).

Its subcellular location is the secreted. Functionally, bacteriocin active against the Gram-negative bacteria S.enteritidis, S.choleraesuis, S.typhimurium, S.gallinarum, E.coli O157:H7, Y.enterocolitica, C.freundii, K.pneumoniae, S.dysentriae, P.aeruginosa, P.mirabilis, M.morganii, C.jejuni and 20 other Campylobacter isolates, and the Gram-positive bacteria S.aureus, S.epidermidis and L.monocytogenes. In Enterococcus sp, this protein is Enterocin E-760.